Here is a 364-residue protein sequence, read N- to C-terminus: Trans-enoyl reductase ccsC (364 aa).

52 to 55 (CDYK) provides a ligand contact to NADP(+). 141–148 (TGLATLGM) is a substrate binding site. NADP(+)-binding positions include 176 to 179 (SSSV), 199 to 202 (SPRN), tyrosine 217, and 264 to 265 (LE). Residue 284–288 (GPALL) participates in substrate binding. 353-354 (VS) serves as a coordination point for NADP(+).

Belongs to the zinc-containing alcohol dehydrogenase family. As to quaternary structure, monomer.

The protein operates within mycotoxin biosynthesis. Its function is as follows. Trans-enoyl reductase; part of the gene cluster that mediates the biosynthesis of a family of the mycotoxins cytochalasins E and K. The hybrid PKS-NRPS synthetase ccsA and the enoyl reductase ccsC are responsible for fusion of phenylalanine with an octaketide backbone and subsequent release of the stable tetramic acid precursor. The polyketide synthase module (PKS) of the PKS-NRPS ccsA is responsible for the synthesis of the octaketide backbone. The downstream nonribosomal peptide synthetase (NRPS) amidates the carboxyl end of the octaketide with a phenylalanine. A reductase-like domain (R) at the C-terminus catalyzes the reductive release of the polyketide-amino acid intermediate. Because ccsA lacks a designated enoylreductase (ER) domain, the required activity is provided the enoyl reductase ccsC. Upon formation of the 11-membered carbocycle-fused perhydroisoindolone intermediate, a number of oxidative steps are required to afford the final cytochalasin E and K, including two hydroxylations at C17 and C18, one alcohol oxidation at C17, one epoxidation at C6 and C7 and two Baeyer-Villiger oxidations. The oxidative modification at C17, C18 and the C6-C7 epoxidation are likely to be catalyzed by the two cytochrome P450 oxygenases ccsD and ccsG. CcsD may be responsible for the epoxidation of the C6-C7 double bond. CcsG may be responsible for the successive oxidative modifications at C17 and C18. The double Baeyer-Villiger oxidations of ketocytochalasin to precytochalasin and cytochalasin Z(16) are among the final steps leading to cytochalasin E and K and are catalyzed by ccsB. The first oxygen insertion step follows that of the classic BVMO mechanism, generating the ester precytochalasin. Release of precytochalasin into an aqueous environment can generate the shunt product iso-precytochalasin through spontaneous isomerization. Alternatively, precytochalasin can undergo further oxidation by ccsB to yield the in-line carbonate-containing cytochalasin Z(16). Cytochalasin Z(16) is a precursor to cytochalasin E and cytochalasin K, whereas iso-precytochalasin is a precursor to cytochalasin Z(17) and rosellichalasin. The hydrolyase ccsE may catalyze hydrolysis of epoxide bond in cytochalasin E to afford cytochalasin K. The function of ccsF has not been assigned but it may play a role in post-PKS-NRPS biosynthetic step, resistance or transport of cytochalasins and related PKS-NRPS products. This Aspergillus clavatus (strain ATCC 1007 / CBS 513.65 / DSM 816 / NCTC 3887 / NRRL 1 / QM 1276 / 107) protein is Trans-enoyl reductase ccsC.